We begin with the raw amino-acid sequence, 152 residues long: MRCPKCTSIEDKVIDSRISKEGSTIRRRRECLECGYRFSTTESLVRDGIVVIKRDGRREEFSRDKLLHAVRAACHKRPVDVEQITMLIEDVIDMLEAHYDSEIPSAAIGDAVMQRLRSMDQVAYVRFASVYKEFRDVSEFMQEISALGKKEK.

Residues 3–34 (CPKCTSIEDKVIDSRISKEGSTIRRRRECLEC) fold into a zinc finger. In terms of domain architecture, ATP-cone spans 49–139 (IVVIKRDGRR…VYKEFRDVSE (91 aa)).

It belongs to the NrdR family. Requires Zn(2+) as cofactor.

Functionally, negatively regulates transcription of bacterial ribonucleotide reductase nrd genes and operons by binding to NrdR-boxes. In Opitutus terrae (strain DSM 11246 / JCM 15787 / PB90-1), this protein is Transcriptional repressor NrdR.